We begin with the raw amino-acid sequence, 414 residues long: TAR DNA-binding protein 43 (414 aa).

Residues K79, K84, K95, K102, and K181 each participate in a glycyl lysine isopeptide (Lys-Gly) (interchain with G-Cter in SUMO2) cross-link. Residues 82 to 98 (KRKMDETDASSAVKVKR) carry the Nuclear localization signal motif. 2 consecutive RRM domains span residues 104–200 (SDLI…RCTE) and 191–262 (RKVF…NAEP). S183 carries the post-translational modification Phosphoserine. The segment at 216–414 (DVMDVFIPKP…MDSKSSGWGM (199 aa)) is interaction with UBQLN2. The short motif at 239–250 (IAQSLCGEDLII) is the Nuclear export signal element. Positions 261 to 274 (EPKHNSNRQLERSG) are enriched in basic and acidic residues. Disordered regions lie at residues 261 to 303 (EPKH…GNNQ) and 341 to 373 (ASQQ…GNNS). K263 is covalently cross-linked (Glycyl lysine isopeptide (Lys-Gly) (interchain with G-Cter in SUMO2)). Over residues 275–303 (RFGGNPGGFGNQGGFGNSRGGGAGLGNNQ) the composition is skewed to gly residues. S292 bears the Phosphoserine mark. An Omega-N-methylarginine modification is found at R293. Low complexity predominate over residues 342-358 (SQQNQSGPSGNNQNQGN).

As to quaternary structure, homodimer. Homooligomer (via its N-terminal domain). Interacts with BRDT. Binds specifically to pyrimidine-rich motifs of TAR DNA and to single stranded TG repeated sequences. Binds to RNA, specifically to UG repeated sequences with a minimum of six contiguous repeats. Interacts with ATXN2; the interaction is RNA-dependent. Interacts with MATR3. Interacts with UBQLN2. Interacts with HNRNPA2B1. Interacts with ZNF106. Interacts with CNOT7/CAF1. Interacts with CRY2. Interacts with PPIA/CYPA; the interaction is dependent on RNA-binding activity of TARDBP and PPIase activity of PPIA/CYPA and acetylation of PPIA/CYPA at 'Lys-125' favors the interaction. Post-translationally, hyperphosphorylated in hippocampus, neocortex, and spinal cord from individuals affected with ALS and FTLDU. Phosphorylated upon cellular stress. Ubiquitinated in hippocampus, neocortex, and spinal cord from individuals affected with ALS and FTLDU. In terms of processing, cleaved to generate C-terminal fragments in hippocampus, neocortex, and spinal cord from individuals affected with ALS and FTLDU. In terms of tissue distribution, ubiquitously expressed. In particular, expression is high in pancreas, placenta, lung, genital tract and spleen.

It is found in the nucleus. It localises to the cytoplasm. Its subcellular location is the stress granule. The protein resides in the mitochondrion. RNA-binding protein that is involved in various steps of RNA biogenesis and processing. Preferentially binds, via its two RNA recognition motifs RRM1 and RRM2, to GU-repeats on RNA molecules predominantly localized within long introns and in the 3'UTR of mRNAs. In turn, regulates the splicing of many non-coding and protein-coding RNAs including proteins involved in neuronal survival, as well as mRNAs that encode proteins relevant for neurodegenerative diseases. Plays a role in maintaining mitochondrial homeostasis by regulating the processing of mitochondrial transcripts. Also regulates mRNA stability by recruiting CNOT7/CAF1 deadenylase on mRNA 3'UTR leading to poly(A) tail deadenylation and thus shortening. In response to oxidative insult, associates with stalled ribosomes localized to stress granules (SGs) and contributes to cell survival. Also participates in the normal skeletal muscle formation and regeneration, forming cytoplasmic myo-granules and binding mRNAs that encode sarcomeric proteins. Plays a role in the maintenance of the circadian clock periodicity via stabilization of the CRY1 and CRY2 proteins in a FBXL3-dependent manner. Negatively regulates the expression of CDK6. Regulates the expression of HDAC6, ATG7 and VCP in a PPIA/CYPA-dependent manner. In Homo sapiens (Human), this protein is TAR DNA-binding protein 43.